Here is a 661-residue protein sequence, read N- to C-terminus: Galactan 5-O-arabinofuranosyltransferase (661 aa).

The next 13 helical transmembrane spans lie at 26–46 (LVAI…LWMG), 64–84 (VASA…WLWL), 108–128 (ALTY…VLAI), 194–214 (AFQP…VPVW), 217–237 (ITGS…IILA), 243–263 (PYAA…SRIA), 265–285 (GDKF…TFYT), 286–306 (LFTG…AAIV), 312–332 (PLLW…ISWG), 362–382 (VPFL…IYLV), 393–413 (MWVG…ITLL), 418–438 (LGFR…VLGI), and 458–478 (TATH…LYYA).

Belongs to the glycosyltransferase 85 family.

It localises to the cell membrane. It carries out the reaction Adds an alpha-D-arabinofuranosyl group from trans,octacis-decaprenylphospho-beta-D-arabinofuranose at the 5-O-position of the eighth, tenth and twelfth galactofuranose unit of the galactofuranan chain of [beta-D-galactofuranosyl-(1-&gt;5)-beta-D-galactofuranosyl-(1-&gt;6)]14-beta-D-galactofuranosyl-(1-&gt;5)-beta-D-galactofuranosyl-(1-&gt;4)-alpha-L-rhamnopyranosyl-(1-&gt;3)-N-acetyl-alpha-D-glucosaminyl-diphospho-trans,octacis-decaprenol.. Its pathway is cell wall biogenesis; cell wall polysaccharide biosynthesis. Involved in the biosynthesis of the arabinogalactan (AG) region of the mycolylarabinogalactan-peptidoglycan (mAGP) complex, an essential component of the cell wall. Catalyzes the addition of the first key arabinofuranosyl (Araf) residue from the sugar donor decaprenyl-phospho-arabinose (DPA) on the C-5 of a 6-linked galactofuranosyl (Galf) of the galactan domain, thus 'priming' the galactan for further elaboration by other arabinofuranosyltransferases. This is Galactan 5-O-arabinofuranosyltransferase from Corynebacterium glutamicum (strain ATCC 13032 / DSM 20300 / JCM 1318 / BCRC 11384 / CCUG 27702 / LMG 3730 / NBRC 12168 / NCIMB 10025 / NRRL B-2784 / 534).